A 286-amino-acid polypeptide reads, in one-letter code: Energy-coupling factor transporter ATP-binding protein EcfA2 (286 aa).

The region spanning 3–246 is the ABC transporter domain; the sequence is IQFNQVSYIY…KTQLLKWHIE (244 aa). An ATP-binding site is contributed by 40 to 47; the sequence is GQTGSGKS.

Belongs to the ABC transporter superfamily. Energy-coupling factor EcfA family. Forms a stable energy-coupling factor (ECF) transporter complex composed of 2 membrane-embedded substrate-binding proteins (S component), 2 ATP-binding proteins (A component) and 2 transmembrane proteins (T component).

The protein localises to the cell membrane. Functionally, ATP-binding (A) component of a common energy-coupling factor (ECF) ABC-transporter complex. Unlike classic ABC transporters this ECF transporter provides the energy necessary to transport a number of different substrates. The protein is Energy-coupling factor transporter ATP-binding protein EcfA2 of Staphylococcus epidermidis (strain ATCC 35984 / DSM 28319 / BCRC 17069 / CCUG 31568 / BM 3577 / RP62A).